The chain runs to 188 residues: Elongation factor P (188 aa).

It belongs to the elongation factor P family.

The protein localises to the cytoplasm. It functions in the pathway protein biosynthesis; polypeptide chain elongation. Functionally, involved in peptide bond synthesis. Stimulates efficient translation and peptide-bond synthesis on native or reconstituted 70S ribosomes in vitro. Probably functions indirectly by altering the affinity of the ribosome for aminoacyl-tRNA, thus increasing their reactivity as acceptors for peptidyl transferase. The chain is Elongation factor P from Bacteroides thetaiotaomicron (strain ATCC 29148 / DSM 2079 / JCM 5827 / CCUG 10774 / NCTC 10582 / VPI-5482 / E50).